A 603-amino-acid polypeptide reads, in one-letter code: Dual specificity protein phosphatase CDC14A (603 aa).

An a region spans residues 7–162 (ELIGACEFMK…GLQHGFFDFE (156 aa)). The segment at 163–176 (TFDAEEYEHYERVE) is linker. The b stretch occupies residues 177–343 (NGDFNWIVPG…QGDIFRSKLK (167 aa)). The Tyrosine-protein phosphatase domain maps to 179–336 (DFNWIVPGKF…KQASLWVQGD (158 aa)). Residue Cys-278 is the Phosphocysteine intermediate of the active site. Ser-484 is modified (phosphoserine). Positions 518 to 538 (NGSTQTPGRNYPELNNNQYTR) are enriched in polar residues. Residues 518–583 (NGSTQTPGRN…RPSFPGSLSS (66 aa)) form a disordered region. Composition is skewed to low complexity over residues 539–558 (SSNS…LNSS) and 573–583 (LRPSFPGSLSS). Ser-592 carries the phosphoserine modification.

The protein belongs to the protein-tyrosine phosphatase family. Non-receptor class CDC14 subfamily. In terms of assembly, interacts with KIF20A. Interaction is required to localize CDC14 to the midzone of the mitotic spindle. In terms of tissue distribution, expressed in the inner ear.

It localises to the nucleus. Its subcellular location is the cytoplasm. It is found in the cytoskeleton. The protein resides in the microtubule organizing center. The protein localises to the centrosome. It localises to the spindle. Its subcellular location is the cell projection. It is found in the kinocilium. The protein resides in the spindle pole. The protein localises to the stereocilium. The catalysed reaction is O-phospho-L-tyrosyl-[protein] + H2O = L-tyrosyl-[protein] + phosphate. It carries out the reaction O-phospho-L-seryl-[protein] + H2O = L-seryl-[protein] + phosphate. The enzyme catalyses O-phospho-L-threonyl-[protein] + H2O = L-threonyl-[protein] + phosphate. Its function is as follows. Dual-specificity phosphatase. Required for centrosome separation and productive cytokinesis during cell division. Dephosphorylates SIRT2 around early anaphase. May dephosphorylate the APC subunit FZR1/CDH1, thereby promoting APC-FZR1 dependent degradation of mitotic cyclins and subsequent exit from mitosis. Required for normal hearing. The chain is Dual specificity protein phosphatase CDC14A (Cdc14a) from Mus musculus (Mouse).